Consider the following 86-residue polypeptide: Omega-theraphotoxin-Hhn1c (86 aa).

Residues Met-1 to Ala-21 form the signal peptide. Positions Ser-22–Arg-50 are excised as a propeptide. Cystine bridges form between Cys-52–Cys-66, Cys-59–Cys-71, and Cys-65–Cys-78.

Belongs to the neurotoxin 10 (Hwtx-1) family. 17 (Hntx-9) subfamily. In terms of tissue distribution, expressed by the venom gland.

The protein resides in the secreted. Ion channel inhibitor. In Cyriopagopus hainanus (Chinese bird spider), this protein is Omega-theraphotoxin-Hhn1c.